Consider the following 111-residue polypeptide: Phosphoribosyl-AMP cyclohydrolase (111 aa).

Asp80 serves as a coordination point for Mg(2+). Position 81 (Cys81) interacts with Zn(2+). Mg(2+) is bound by residues Asp82 and Asp84. Cys97 and Cys104 together coordinate Zn(2+).

Belongs to the PRA-CH family. In terms of assembly, homodimer. Requires Mg(2+) as cofactor. The cofactor is Zn(2+).

It localises to the cytoplasm. The catalysed reaction is 1-(5-phospho-beta-D-ribosyl)-5'-AMP + H2O = 1-(5-phospho-beta-D-ribosyl)-5-[(5-phospho-beta-D-ribosylamino)methylideneamino]imidazole-4-carboxamide. It functions in the pathway amino-acid biosynthesis; L-histidine biosynthesis; L-histidine from 5-phospho-alpha-D-ribose 1-diphosphate: step 3/9. Functionally, catalyzes the hydrolysis of the adenine ring of phosphoribosyl-AMP. This Mycobacterium ulcerans (strain Agy99) protein is Phosphoribosyl-AMP cyclohydrolase.